The sequence spans 2592 residues: 6-hydroxymellein synthase cdmE (2592 aa).

A compositionally biased stretch (basic and acidic residues) spans 1-11 (MVLHPSDRRFP). The segment at 1 to 25 (MVLHPSDRRFPETNGVGGHSKDSSA) is disordered. The region spanning 32-456 (LEPLAIVGFA…GTNAHVVLES (425 aa)) is the Ketosynthase family 3 (KS3) domain. Residues cysteine 205, histidine 340, and histidine 379 each act as for beta-ketoacyl synthase activity in the active site. The segment at 589-910 (VFTGQGAQWP…RYSHTITRKK (322 aa)) is malonyl-CoA:ACP transacylase (MAT) domain. The segment at 978–1113 (HELLGSPDPD…GFIESKCESD (136 aa)) is N-terminal hotdog fold. The interval 978 to 1291 (HELLGSPDPD…IRGTELCLLS (314 aa)) is dehydratase (DH) domain. The 319-residue stretch at 978–1296 (HELLGSPDPD…LCLLSAGRGD (319 aa)) folds into the PKS/mFAS DH domain. The tract at residues 1140 to 1296 (TQIGSISAFY…LCLLSAGRGD (157 aa)) is C-terminal hotdog fold. Isoleucine 1462 and glutamate 1484 together coordinate S-adenosyl-L-methionine. Residues 1483–1591 (LEIGTGFGSV…HSLLKPGGKL (109 aa)) are methyltransferase (CMeT) domain. The tract at residues 1887–2199 (GLLVWSDDEA…NDSNMDTAVI (313 aa)) is enoyl reductase (ER) domain. The interval 2223–2398 (ATYVIAGGLG…IPGMSVNLGN (176 aa)) is ketoreductase (KR) domain. In terms of domain architecture, Carrier spans 2509–2586 (VAASHVTEAI…GLSEKIARQS (78 aa)). Serine 2546 is subject to O-(pantetheine 4'-phosphoryl)serine.

The catalysed reaction is 5 malonyl-CoA + AH2 + 5 H(+) = 6-hydroxymellein + A + 5 CO2 + 5 CoA + H2O. It functions in the pathway secondary metabolite biosynthesis; terpenoid biosynthesis. Its function is as follows. Highly reducing polyketide synthase; part of the gene cluster that mediates the biosynthesis of chrodrimanin B, a meroterpenoid that acts as a potent blocker of insect GABA-gated chloride channels. The first step of the pathway is the biosynthesis of 6-hydroxymellein by the polyketide synthase cdmE. The prenyltransferase cdmH acts as a 6-hydroxymellein 5-farnesyltransferase and produces the hydrophobic metabolite verruculide C. The FAD-dependent monooxygenase cdmI further converts verruculide C into verruculide B. The terpene cyclase cdmG then produced the pentacyclic molecule 3-hydroxypentacecilide A, the backbone structure of chrodrimanin B, via folding the farnesyl moiety of the substrate into the chair-boat conformation. The short-chain dehydrogenase/reductase cdmF functions as the 3-OH dehydrogenase that oxidizes the C-3 hydroxyl group of 3-hydroxypentacecilide A and produces chrodrimanin C, the dehydrogenated product of 3-hydroxypentacecilide A. The cytochrome P450 monooxygenase cdmJ then accepts both 3-hydroxypentacecilide A and chrodrimanin C and functions as a C-7-beta-hydroxylase to produce respectively chrodrimanin H and chrodrimanin F. The dioxygenase cdmA accepts chrodrimanin H to afford chrodrimanin E, which is further transformed to chrodrimanin A by the dioxygenase cdmD. CdmA can also accept chrodrimanin C as substrate to convert it into verruculide A, which is further converted into chrodrimanin T by cdmD. The last step of the biosynthesis is proposed to be performed by the acetyltransferase cdmC which acetylates chrodrimanin A to yield chrodrimanin B. The pathway may also lead to the production of additional shunt products, including chrodrimanins T and U. This chain is 6-hydroxymellein synthase cdmE, found in Talaromyces verruculosus (Penicillium verruculosum).